A 278-amino-acid chain; its full sequence is Urease accessory protein UreD (278 aa).

It belongs to the UreD family. As to quaternary structure, ureD, UreF and UreG form a complex that acts as a GTP-hydrolysis-dependent molecular chaperone, activating the urease apoprotein by helping to assemble the nickel containing metallocenter of UreC. The UreE protein probably delivers the nickel.

The protein resides in the cytoplasm. Required for maturation of urease via the functional incorporation of the urease nickel metallocenter. This chain is Urease accessory protein UreD, found in Leptothrix cholodnii (strain ATCC 51168 / LMG 8142 / SP-6) (Leptothrix discophora (strain SP-6)).